A 281-amino-acid polypeptide reads, in one-letter code: Putative dehydrogenase/reductase SDR family member 4-like 1 (281 aa).

Residue 36-60 (LVTASTDWIGFAVAQRLAQDGAHVV) coordinates NADP(+). Ser172 is a binding site for substrate. Catalysis depends on Tyr185, which acts as the Proton acceptor. Position 189 (Lys189) interacts with NADP(+). The Peroxisomal targeting signal motif lies at 279–281 (SRL).

The protein belongs to the short-chain dehydrogenases/reductases (SDR) family.

Its function is as follows. Putative oxidoreductase. In Homo sapiens (Human), this protein is Putative dehydrogenase/reductase SDR family member 4-like 1.